The following is a 907-amino-acid chain: Protein translocase subunit SecA (907 aa).

ATP-binding positions include glutamine 87, 105 to 109, and aspartate 512; that span reads GEGKT. The disordered stretch occupies residues 869-897; sequence AESLSAHTPVVREGEKVGRNDPCPCGSGR. The segment covering 878–887 has biased composition (basic and acidic residues); that stretch reads VVREGEKVGR. Cysteine 891, cysteine 893, cysteine 902, and histidine 903 together coordinate Zn(2+).

Belongs to the SecA family. In terms of assembly, monomer and homodimer. Part of the essential Sec protein translocation apparatus which comprises SecA, SecYEG and auxiliary proteins SecDF-YajC and YidC. Requires Zn(2+) as cofactor.

Its subcellular location is the cell inner membrane. It is found in the cytoplasm. The catalysed reaction is ATP + H2O + cellular proteinSide 1 = ADP + phosphate + cellular proteinSide 2.. Part of the Sec protein translocase complex. Interacts with the SecYEG preprotein conducting channel. Has a central role in coupling the hydrolysis of ATP to the transfer of proteins into and across the cell membrane, serving both as a receptor for the preprotein-SecB complex and as an ATP-driven molecular motor driving the stepwise translocation of polypeptide chains across the membrane. In Shewanella sediminis (strain HAW-EB3), this protein is Protein translocase subunit SecA.